The following is a 165-amino-acid chain: Cytochrome c-550-like protein (165 aa).

An N-terminal signal peptide occupies residues 1–30; the sequence is MLNKSLLIRFVLTILIIVQVIIFDTQPVQA. Heme c contacts are provided by Cys-75, Cys-78, His-79, and Cys-129.

The protein belongs to the cytochrome c family. PsbV subfamily. The cofactor is heme c.

Its subcellular location is the cellular thylakoid membrane. Functionally, possible low-potential cytochrome c. The chain is Cytochrome c-550-like protein (psbV2) from Trichodesmium erythraeum (strain IMS101).